We begin with the raw amino-acid sequence, 227 residues long: Octanoyltransferase (227 aa).

The region spanning 31–209 is the BPL/LPL catalytic domain; that stretch reads ANTIDEIWLV…VFLSLLGGTN (179 aa). Residues 71-78, 139-141, and 152-154 contribute to the substrate site; these read RGGKITYH, SIG, and GLA. C170 functions as the Acyl-thioester intermediate in the catalytic mechanism.

This sequence belongs to the LipB family.

It localises to the cytoplasm. The catalysed reaction is octanoyl-[ACP] + L-lysyl-[protein] = N(6)-octanoyl-L-lysyl-[protein] + holo-[ACP] + H(+). Its pathway is protein modification; protein lipoylation via endogenous pathway; protein N(6)-(lipoyl)lysine from octanoyl-[acyl-carrier-protein]: step 1/2. Its function is as follows. Catalyzes the transfer of endogenously produced octanoic acid from octanoyl-acyl-carrier-protein onto the lipoyl domains of lipoate-dependent enzymes. Lipoyl-ACP can also act as a substrate although octanoyl-ACP is likely to be the physiological substrate. This Baumannia cicadellinicola subsp. Homalodisca coagulata protein is Octanoyltransferase.